Consider the following 463-residue polypeptide: Probable diacyglycerol O-acyltransferase tgs1 (463 aa).

Methionine 1 carries the post-translational modification N-acetylmethionine. The active-site Proton acceptor is the histidine 137.

The protein belongs to the long-chain O-acyltransferase family.

The catalysed reaction is an acyl-CoA + a 1,2-diacyl-sn-glycerol = a triacyl-sn-glycerol + CoA. It catalyses the reaction di-(9Z)-octadecenoylglycerol + (9Z)-octadecenoyl-CoA = 1,2,3-tri-(9Z-octadecenoyl)-glycerol + CoA. Its pathway is glycerolipid metabolism; triacylglycerol biosynthesis. Functionally, catalyzes the terminal and only committed step in triacylglycerol synthesis by using diacylglycerol and fatty acyl CoA as substrates. Required for storage lipid synthesis. Its function is as follows. Upon expression in E.coli functions as a triacylglycerol synthase, making triacylglycerol (TG) from diolein and long-chain fatty acyl-CoA. Prefers C(26:0)-CoA over C(18:1)-CoA. TG synthesis activity increases in M.tuberculosis upon oxygen depletion and NO treatment, with concomitant accumulation of TG in inclusion bodies. As disruption of the gene encoding this protein obviates TG synthesis this seems to be the major enzyme involved in production of TG. Has no wax synthase activity to produce wax esters. This is Probable diacyglycerol O-acyltransferase tgs1 (tgs1) from Mycobacterium tuberculosis (strain ATCC 25618 / H37Rv).